The following is a 453-amino-acid chain: UDP-N-acetylmuramate--L-alanine ligase (453 aa).

112–118 (GTHGKTT) contributes to the ATP binding site.

The protein belongs to the MurCDEF family.

The protein resides in the cytoplasm. It catalyses the reaction UDP-N-acetyl-alpha-D-muramate + L-alanine + ATP = UDP-N-acetyl-alpha-D-muramoyl-L-alanine + ADP + phosphate + H(+). It participates in cell wall biogenesis; peptidoglycan biosynthesis. Functionally, cell wall formation. The sequence is that of UDP-N-acetylmuramate--L-alanine ligase from Lawsonia intracellularis (strain PHE/MN1-00).